The sequence spans 378 residues: Carbamoyl phosphate synthase small chain (378 aa).

The segment at 1-188 (MLPSFPPAIL…LGRGYGVQDK (188 aa)) is CPSase. Positions 50, 240, and 242 each coordinate L-glutamine. Residues 192-378 (HVVAYDFGVK…FTAAMAERKQ (187 aa)) enclose the Glutamine amidotransferase type-1 domain. Cysteine 268 (nucleophile) is an active-site residue. The L-glutamine site is built by leucine 269, glutamine 272, asparagine 310, glycine 312, and phenylalanine 313. Active-site residues include histidine 352 and glutamate 354.

It belongs to the CarA family. As to quaternary structure, composed of two chains; the small (or glutamine) chain promotes the hydrolysis of glutamine to ammonia, which is used by the large (or ammonia) chain to synthesize carbamoyl phosphate. Tetramer of heterodimers (alpha,beta)4.

The catalysed reaction is hydrogencarbonate + L-glutamine + 2 ATP + H2O = carbamoyl phosphate + L-glutamate + 2 ADP + phosphate + 2 H(+). The enzyme catalyses L-glutamine + H2O = L-glutamate + NH4(+). It participates in amino-acid biosynthesis; L-arginine biosynthesis; carbamoyl phosphate from bicarbonate: step 1/1. Its pathway is pyrimidine metabolism; UMP biosynthesis via de novo pathway; (S)-dihydroorotate from bicarbonate: step 1/3. In terms of biological role, small subunit of the glutamine-dependent carbamoyl phosphate synthetase (CPSase). CPSase catalyzes the formation of carbamoyl phosphate from the ammonia moiety of glutamine, carbonate, and phosphate donated by ATP, constituting the first step of 2 biosynthetic pathways, one leading to arginine and/or urea and the other to pyrimidine nucleotides. The small subunit (glutamine amidotransferase) binds and cleaves glutamine to supply the large subunit with the substrate ammonia. The sequence is that of Carbamoyl phosphate synthase small chain from Ralstonia nicotianae (strain ATCC BAA-1114 / GMI1000) (Ralstonia solanacearum).